The sequence spans 217 residues: uncharacterized protein (217 aa).

The next 4 membrane-spanning stretches (helical) occupy residues 9-29, 54-74, 103-125, and 135-157; these read ISLA…LSTI, FLST…LLEL, LMAY…RFLS, and IVFW…ASYI.

It belongs to the DP1 family.

Its subcellular location is the endoplasmic reticulum membrane. This is an uncharacterized protein from Schizosaccharomyces pombe (strain 972 / ATCC 24843) (Fission yeast).